A 98-amino-acid polypeptide reads, in one-letter code: NADH-ubiquinone oxidoreductase chain 4L (98 aa).

Transmembrane regions (helical) follow at residues 1–21 (MSIT…GLLL), 29–49 (SLLC…MIIL), and 61–81 (IILL…LVMV).

This sequence belongs to the complex I subunit 4L family. In terms of assembly, core subunit of respiratory chain NADH dehydrogenase (Complex I) which is composed of 45 different subunits.

The protein resides in the mitochondrion inner membrane. The catalysed reaction is a ubiquinone + NADH + 5 H(+)(in) = a ubiquinol + NAD(+) + 4 H(+)(out). Its function is as follows. Core subunit of the mitochondrial membrane respiratory chain NADH dehydrogenase (Complex I) which catalyzes electron transfer from NADH through the respiratory chain, using ubiquinone as an electron acceptor. Part of the enzyme membrane arm which is embedded in the lipid bilayer and involved in proton translocation. The protein is NADH-ubiquinone oxidoreductase chain 4L (MT-ND4L) of Platyrrhinus dorsalis (Thomas's broad-nosed bat).